We begin with the raw amino-acid sequence, 729 residues long: Phenylalanine ammonia-lyase (729 aa).

Tyr-77 acts as the Proton donor/acceptor in catalysis. Positions 182–184 (ASG) form a cross-link, 5-imidazolinone (Ala-Gly). A 2,3-didehydroalanine (Ser) modification is found at Ser-183. (E)-cinnamate-binding residues include Asn-241, Gln-336, Arg-342, Asn-372, Lys-443, Glu-471, and Asn-474.

It belongs to the PAL/histidase family. Contains an active site 4-methylidene-imidazol-5-one (MIO), which is formed autocatalytically by cyclization and dehydration of residues Ala-Ser-Gly.

It localises to the cytoplasm. The enzyme catalyses L-phenylalanine = (E)-cinnamate + NH4(+). It participates in secondary metabolite biosynthesis. It functions in the pathway phenylpropanoid metabolism; trans-cinnamate biosynthesis; trans-cinnamate from L-phenylalanine: step 1/1. Phenylalanine ammonia-lyase; part of the gene cluster that mediates the biosynthesis of squalestatin S1 (SQS1, also known as zaragozic acid A), a heavily oxidized fungal polyketide that offers potent cholesterol lowering activity by targeting squalene synthase (SS). SQS1 is composed of a 2,8-dioxobicyclic[3.2.1]octane-3,4,5-tricarboxyclic acid core that is connected to two lipophilic polyketide arms. These initial steps feature the priming of an unusual benzoic acid starter unit onto the highly reducing polyketide synthase pks2, followed by oxaloacetate extension and product release to generate a tricarboxylic acid containing product. The phenylalanine ammonia lyase (PAL) M7 and the acyl-CoA ligase M9 are involved in transforming phenylalanine into benzoyl-CoA. The citrate synthase-like protein R3 is involved in connecting the C-alpha-carbons of the hexaketide chain and oxaloacetate to afford the tricarboxylic acid unit. The potential hydrolytic enzymes, M8 and M10, are in close proximity to pks2 and may participate in product release. On the other side, the tetraketide arm is synthesized by a the squalestatin tetraketide synthase pks1 and enzymatically esterified to the core in the last biosynthetic step, by the acetyltransferase M4. The biosynthesis of the tetraketide must involve 3 rounds of chain extension. After the first and second rounds methyl-transfer occurs, and in all rounds of extension the ketoreductase and dehydratase are active. The enoyl reductase and C-MeT of pks1 are not active in the final round of extension. The acetyltransferase M4 appears to have a broad substrate selectivity for its acyl CoA substrate, allowing the in vitro synthesis of novel squalestatins. The biosynthesis of SQS1 requires several oxidative steps likely performed by oxidoreductases M1, R1 and R2. Finally, in support of the identification of the cluster as being responsible for SQS1 production, the cluster contains a gene encoding a putative squalene synthase (SS) R6, suggesting a likely mechanism for self-resistance. The chain is Phenylalanine ammonia-lyase from Phoma sp. (strain ATCC 20986 / MF5453).